Reading from the N-terminus, the 63-residue chain is Toxin Tx7335 (63 aa).

4 cysteine pairs are disulfide-bonded: C3/C24, C17/C39, C25/C55, and C56/C61.

Post-translationally, contains 4 disulfide bonds. In terms of tissue distribution, expressed by the venom gland.

The protein resides in the secreted. Its function is as follows. Activates bacterial pH-gated potassium channel KcsA by binding to its extracellular domain, probably at a site different from channel inhibitors. Increases both mean open time and open probability of KscA. The sequence is that of Toxin Tx7335 from Dendroaspis angusticeps (Eastern green mamba).